Here is a 462-residue protein sequence, read N- to C-terminus: tRNA pseudouridine(32) synthase, mitochondrial (462 aa).

The transit peptide at methionine 1 to asparagine 24 directs the protein to the mitochondrion. Residues lysine 127 to isoleucine 188 form the S4 RNA-binding domain. The active site involves aspartate 238.

The protein belongs to the pseudouridine synthase RluA family.

It is found in the mitochondrion. It carries out the reaction uridine(32) in tRNA = pseudouridine(32) in tRNA. In terms of biological role, responsible for synthesis of pseudouridine from uracil-32 in mitochondrial transfer RNAs. The polypeptide is tRNA pseudouridine(32) synthase, mitochondrial (PUS9) (Saccharomyces cerevisiae (strain ATCC 204508 / S288c) (Baker's yeast)).